The primary structure comprises 383 residues: Succinyl-diaminopimelate desuccinylase (383 aa).

Residue His-74 coordinates Zn(2+). The active site involves Asp-76. Asp-107 provides a ligand contact to Zn(2+). Glu-141 serves as the catalytic Proton acceptor. Positions 142, 170, and 356 each coordinate Zn(2+).

The protein belongs to the peptidase M20A family. DapE subfamily. Homodimer. Requires Zn(2+) as cofactor. It depends on Co(2+) as a cofactor.

It catalyses the reaction N-succinyl-(2S,6S)-2,6-diaminopimelate + H2O = (2S,6S)-2,6-diaminopimelate + succinate. The protein operates within amino-acid biosynthesis; L-lysine biosynthesis via DAP pathway; LL-2,6-diaminopimelate from (S)-tetrahydrodipicolinate (succinylase route): step 3/3. Its function is as follows. Catalyzes the hydrolysis of N-succinyl-L,L-diaminopimelic acid (SDAP), forming succinate and LL-2,6-diaminopimelate (DAP), an intermediate involved in the bacterial biosynthesis of lysine and meso-diaminopimelic acid, an essential component of bacterial cell walls. The sequence is that of Succinyl-diaminopimelate desuccinylase from Polynucleobacter necessarius subsp. necessarius (strain STIR1).